The following is a 1166-amino-acid chain: DNA-directed RNA polymerase I subunit RPA2 (1166 aa).

A C4-type zinc finger spans residues 1081 to 1130 (CQNCGSILSCYVNRAIMKTQTFIPPSLDESNKDTEDKEIHMNEKVICKVC).

This sequence belongs to the RNA polymerase beta chain family. Component of the RNA polymerase I (Pol I) complex consisting of at least 13 subunits.

Its subcellular location is the nucleus. It localises to the nucleolus. The enzyme catalyses RNA(n) + a ribonucleoside 5'-triphosphate = RNA(n+1) + diphosphate. Its function is as follows. DNA-dependent RNA polymerase catalyzes the transcription of DNA into RNA using the four ribonucleoside triphosphates as substrates. Second largest core component of RNA polymerase I which synthesizes ribosomal RNA precursors. Proposed to contribute to the polymerase catalytic activity and forms the polymerase active center together with the largest subunit. Pol I is composed of mobile elements and RPA2 is part of the core element with the central large cleft and probably a clamp element that moves to open and close the cleft. The protein is DNA-directed RNA polymerase I subunit RPA2 (RPA2) of Euplotoides octocarinatus (Freshwater ciliate).